A 356-amino-acid polypeptide reads, in one-letter code: D-alanine--D-alanine ligase (356 aa).

The 206-residue stretch at 134–339 (KQLFATRGLP…YSELITDLIN (206 aa)) folds into the ATP-grasp domain. Position 167–222 (167–222 (EGKLTYPVFVKPANLGSSVGISKCTDSETLIHGIEEALQFDRKLVIEQGVNAREVE)) interacts with ATP. Mg(2+) is bound by residues D293, E306, and N308.

This sequence belongs to the D-alanine--D-alanine ligase family. Requires Mg(2+) as cofactor. The cofactor is Mn(2+).

It is found in the cytoplasm. It carries out the reaction 2 D-alanine + ATP = D-alanyl-D-alanine + ADP + phosphate + H(+). It functions in the pathway cell wall biogenesis; peptidoglycan biosynthesis. Functionally, cell wall formation. The polypeptide is D-alanine--D-alanine ligase (Macrococcus caseolyticus (strain JCSC5402) (Macrococcoides caseolyticum)).